The primary structure comprises 385 residues: MSDHSPLALAQALIRCPSVTPEEGGALSFLADRLSRAGFSVERPVFSEPGTPDIQNLYARIGTAGPVLVFAGHTDVVPPGEVGSWTHGPFSGEVAEGFLYGRGAVDMKGGIACMLAATLAFLDRHGPDFGGSIAFLVTGDEEGPAVNGTVKLLDWAKARGERFDHCLLGEPTNPDTLGEMIKIGRRGSLTGRITVHGRQGHVAYPHRAENPIPGLLRLASALTADPLDGGTAHFDASNLEFTTIDVGNPATNVIPASAKAVFNVRFNDDWTADTLGAEIRRRLEAAAGNAVRFSLDLQPSNSPAFLTQPDAFVDRVADAIEAETGRRPALSTTGGTSDARFIKDACPVIEFGLVGRTMHETDERVAVADLDRLTAIYGRVLDAYF.

His-73 lines the Zn(2+) pocket. Asp-75 is a catalytic residue. Position 106 (Asp-106) interacts with Zn(2+). Catalysis depends on Glu-141, which acts as the Proton acceptor. Zn(2+)-binding residues include Glu-142, Glu-170, and His-359.

It belongs to the peptidase M20A family. DapE subfamily. Homodimer. It depends on Zn(2+) as a cofactor. Co(2+) is required as a cofactor.

The enzyme catalyses N-succinyl-(2S,6S)-2,6-diaminopimelate + H2O = (2S,6S)-2,6-diaminopimelate + succinate. Its pathway is amino-acid biosynthesis; L-lysine biosynthesis via DAP pathway; LL-2,6-diaminopimelate from (S)-tetrahydrodipicolinate (succinylase route): step 3/3. Functionally, catalyzes the hydrolysis of N-succinyl-L,L-diaminopimelic acid (SDAP), forming succinate and LL-2,6-diaminopimelate (DAP), an intermediate involved in the bacterial biosynthesis of lysine and meso-diaminopimelic acid, an essential component of bacterial cell walls. The chain is Succinyl-diaminopimelate desuccinylase from Methylorubrum extorquens (strain PA1) (Methylobacterium extorquens).